A 20-amino-acid polypeptide reads, in one-letter code: Cytochrome c oxidase subunit 8B, mitochondrial (20 aa).

A disordered region spans residues 1 to 20 (LSGKPAKXHLSVGEQAIAMT).

This sequence belongs to the cytochrome c oxidase VIII family. Component of the cytochrome c oxidase (complex IV, CIV), a multisubunit enzyme composed of 14 subunits. The complex is composed of a catalytic core of 3 subunits MT-CO1, MT-CO2 and MT-CO3, encoded in the mitochondrial DNA, and 11 supernumerary subunits COX4I, COX5A, COX5B, COX6A, COX6B, COX6C, COX7A, COX7B, COX7C, COX8 and NDUFA4, which are encoded in the nuclear genome. The complex exists as a monomer or a dimer and forms supercomplexes (SCs) in the inner mitochondrial membrane with NADH-ubiquinone oxidoreductase (complex I, CI) and ubiquinol-cytochrome c oxidoreductase (cytochrome b-c1 complex, complex III, CIII), resulting in different assemblies (supercomplex SCI(1)III(2)IV(1) and megacomplex MCI(2)III(2)IV(2)).

Its subcellular location is the mitochondrion inner membrane. Its pathway is energy metabolism; oxidative phosphorylation. Functionally, component of the cytochrome c oxidase, the last enzyme in the mitochondrial electron transport chain which drives oxidative phosphorylation. The respiratory chain contains 3 multisubunit complexes succinate dehydrogenase (complex II, CII), ubiquinol-cytochrome c oxidoreductase (cytochrome b-c1 complex, complex III, CIII) and cytochrome c oxidase (complex IV, CIV), that cooperate to transfer electrons derived from NADH and succinate to molecular oxygen, creating an electrochemical gradient over the inner membrane that drives transmembrane transport and the ATP synthase. Cytochrome c oxidase is the component of the respiratory chain that catalyzes the reduction of oxygen to water. Electrons originating from reduced cytochrome c in the intermembrane space (IMS) are transferred via the dinuclear copper A center (CU(A)) of subunit 2 and heme A of subunit 1 to the active site in subunit 1, a binuclear center (BNC) formed by heme A3 and copper B (CU(B)). The BNC reduces molecular oxygen to 2 water molecules using 4 electrons from cytochrome c in the IMS and 4 protons from the mitochondrial matrix. This chain is Cytochrome c oxidase subunit 8B, mitochondrial, found in Oncorhynchus mykiss (Rainbow trout).